The primary structure comprises 261 residues: Acidic leucine-rich nuclear phosphoprotein 32 family member B (261 aa).

LRR repeat units lie at residues 16 to 40 (PAAV…LTAE), 43 to 64 (NLEF…PKLP), 65 to 87 (KLKK…AEKL), and 89 to 110 (NLTH…EPLK). K86 is subject to N6-acetyllysine. One can recognise an LRRCT domain in the interval 123 to 161 (CEVTNLNDYRESVFKLLPQLTYLDGYDREDREAPDSDAE). Positions 149-261 (DREDREAPDS…RETDDEGEDD (113 aa)) are disordered. The span at 157–243 (DSDAEVDGVD…DEDEDEEEEE (87 aa)) shows a compositional bias: acidic residues. Position 158 is a phosphoserine (S158). Positions 244–254 (SGKGEGRKRET) are enriched in basic and acidic residues. At T254 the chain carries Phosphothreonine.

This sequence belongs to the ANP32 family. In terms of assembly, monomer. Interacts with histones H3 and H4. Some glutamate residues are glycylated by TTLL8. This modification occurs exclusively on glutamate residues and results in a glycine chain on the gamma-carboxyl group.

It is found in the nucleus. Its function is as follows. Multifunctional protein working as a cell cycle progression factor as well as a cell survival factor. Required for the progression from the G1 to the S phase. Anti-apoptotic protein which functions as a caspase-3 inhibitor. Has no phosphatase 2A (PP2A) inhibitor activity. Exhibits histone chaperone properties, stimulating core histones to assemble into a nucleosome. This Ovis aries (Sheep) protein is Acidic leucine-rich nuclear phosphoprotein 32 family member B (ANP32B).